Reading from the N-terminus, the 367-residue chain is Ferrochelatase (367 aa).

Residues H213 and E294 each coordinate Fe cation.

It belongs to the ferrochelatase family.

It is found in the cytoplasm. The enzyme catalyses heme b + 2 H(+) = protoporphyrin IX + Fe(2+). The protein operates within porphyrin-containing compound metabolism; protoheme biosynthesis; protoheme from protoporphyrin-IX: step 1/1. Functionally, catalyzes the ferrous insertion into protoporphyrin IX. The chain is Ferrochelatase from Dechloromonas aromatica (strain RCB).